The primary structure comprises 530 residues: Calcium uptake protein 3, mitochondrial (530 aa).

A mitochondrion-targeting transit peptide spans 1–43; it reads MAALRRLLWPPPRVSPPLCAHQPLLGPWGRPAVTTLGLPGRPF. A disordered region spans residues 92–115; that stretch reads GSPATGRPSKSAATEPEDPPRGRG. An EF-hand 1 domain is found at 232-267; the sequence is KPHAGFRIAFNMFDTDGNEMVDKKEFLVLQEIFRKK. The Ca(2+) site is built by aspartate 245, aspartate 247, asparagine 249, methionine 251, aspartate 253, and glutamate 256. One can recognise an EF-hand 2; degenerate domain in the interval 401 to 436; it reads VENTSVFLENVRYSIPEEKGITFDEFRSFFQFLNNL. In terms of domain architecture, EF-hand 3 spans 470-505; it reads FSPHLVNTVFKIFDVDKDDQLSYKEFIGIMKDRLHR. 5 residues coordinate Ca(2+): aspartate 483, aspartate 485, aspartate 487, glutamine 489, and glutamate 494.

This sequence belongs to the MICU1 family. MICU3 subfamily. Heterodimer; disulfide-linked; heterodimerizes with MICU1. Component of the uniplex complex, composed of MCU, EMRE/SMDT1, MICU1 and MICU3 in a 4:4:1:1 stoichiometry. In terms of tissue distribution, specifically expressed in the central nervous system and skeletal muscle.

It is found in the mitochondrion intermembrane space. The protein localises to the mitochondrion inner membrane. Its function is as follows. Tissue-specific calcium sensor of the mitochondrial calcium uniporter (MCU) channel, which specifically regulates MCU channel activity in the central nervous system and skeletal muscle. Senses calcium level via its EF-hand domains: compared to MICU1 and MICU2, MICU3 has a higher affinity for calcium. MICU1 and MICU3 form a disulfide-linked heterodimer that stimulates and inhibits MCU activity, depending on the concentration of calcium. At low calcium levels, MICU1 occludes the pore of the MCU channel, preventing mitochondrial calcium uptake. At higher calcium levels, calcium-binding to MICU1 and MICU3 induces a conformational change that weakens MCU-MICU1 interactions and moves the MICU1-MICU3 heterodimer away from the pore, allowing calcium permeation through the MCU channel. The high calcium affinity of MICU3 lowers the calcium threshold necessary for calcium permeation through the MCU channel. The MICU1-MICU3 heterodimer promotes flexibility of neurotransmission in neuronal cells by enhancing mitochondrial calcium uptake in presynapses. It is also required to increase mitochondrial calcium uptake in skeletal muscle cells, thereby increasing ATP production. This chain is Calcium uptake protein 3, mitochondrial, found in Homo sapiens (Human).